The following is a 702-amino-acid chain: Elongation factor G 1 (702 aa).

Residues 8–290 (ERYRNIGISA…AVIDFLPSPV (283 aa)) enclose the tr-type G domain. GTP is bound by residues 17 to 24 (AHIDAGKT), 88 to 92 (DTPGH), and 142 to 145 (NKMD).

It belongs to the TRAFAC class translation factor GTPase superfamily. Classic translation factor GTPase family. EF-G/EF-2 subfamily.

It localises to the cytoplasm. Functionally, catalyzes the GTP-dependent ribosomal translocation step during translation elongation. During this step, the ribosome changes from the pre-translocational (PRE) to the post-translocational (POST) state as the newly formed A-site-bound peptidyl-tRNA and P-site-bound deacylated tRNA move to the P and E sites, respectively. Catalyzes the coordinated movement of the two tRNA molecules, the mRNA and conformational changes in the ribosome. In Cupriavidus pinatubonensis (strain JMP 134 / LMG 1197) (Cupriavidus necator (strain JMP 134)), this protein is Elongation factor G 1.